We begin with the raw amino-acid sequence, 1385 residues long: Contactin-associated protein 1 (1385 aa).

The signal sequence occupies residues 1–20 (MMSLRLFSILLATVVSGAWG). Residues 21-1284 (WGYYGCNEEL…PYYHDDGWIA (1264 aa)) lie on the Extracellular side of the membrane. Residues 26–169 (CNEELVGPLY…IGLRLGIYGC (144 aa)) enclose the F5/8 type C domain. The cysteines at positions 26 and 169 are disulfide-linked. 3 N-linked (GlcNAc...) asparagine glycosylation sites follow: asparagine 121, asparagine 129, and asparagine 277. 2 Laminin G-like domains span residues 204–356 (FKTE…AFRC) and 390–539 (FRTW…FDTC). Cysteine 324 and cysteine 356 form a disulfide bridge. N-linked (GlcNAc...) asparagine glycans are attached at residues asparagine 421, asparagine 500, and asparagine 519. Intrachain disulfides connect cysteine 507-cysteine 539, cysteine 545-cysteine 556, cysteine 550-cysteine 565, and cysteine 567-cysteine 577. The 33-residue stretch at 545–577 (CSPNMCEHDGRCYQSWDDFICYCELTGYKGVTC) folds into the EGF-like 1 domain. The Fibrinogen C-terminal domain maps to 577–796 (CHEPLYKESC…NTISFHTGAA (220 aa)). 9 N-linked (GlcNAc...) asparagine glycosylation sites follow: asparagine 598, asparagine 654, asparagine 665, asparagine 764, asparagine 805, asparagine 844, asparagine 861, asparagine 949, and asparagine 957. One can recognise a Laminin G-like 3 domain in the interval 814–958 (FRTSAPSGVF…NASEGTFPNC (145 aa)). Disulfide bonds link cysteine 931-cysteine 958, cysteine 962-cysteine 975, cysteine 969-cysteine 984, and cysteine 986-cysteine 996. One can recognise an EGF-like 2 domain in the interval 962–996 (CTHPRFPCFHGGRCVERYSYYTCDCDLTAFDGPYC). Asparagine 1079 and asparagine 1148 each carry an N-linked (GlcNAc...) asparagine glycan. In terms of domain architecture, Laminin G-like 4 spans 1089–1251 (FSTNSAPAVL…VQGELSESNC (163 aa)). A disulfide bridge connects residues cysteine 1210 and cysteine 1251. The helical transmembrane segment at 1285–1305 (ILLGFLVAFLLLGLVGMLVLF) threads the bilayer. Residues 1306 to 1385 (YLQNHRYKGS…PQILEESRSE (80 aa)) lie on the Cytoplasmic side of the membrane. The tract at residues 1317–1385 (HTNEPKATHD…PQILEESRSE (69 aa)) is disordered. The span at 1319–1329 (NEPKATHDSHP) shows a compositional bias: basic and acidic residues. Pro residues predominate over residues 1334–1367 (PLPPSGPAQAPAPTPAPTQLPTPAPAPAPAPASG). The SH3-binding motif lies at 1334–1370 (PLPPSGPAQAPAPTPAPTQLPTPAPAPAPAPASGPGP). The residue at position 1384 (serine 1384) is a Phosphoserine.

Belongs to the neurexin family. In terms of assembly, interacts with CNTN1/contactin in cis form. As to expression, expressed in brain. In myelinated nerve fibers predominantly found in paranodal axoglial junctions. In the internodal region of myelinated axons in the CNS and the PNS also found as a thin line apposing the inner mesaxon of the myelin sheath. In PNS neurons this line forms a circumferential ring that apposes the innermost aspect of Schmidt-Lanterman incisures.

It is found in the membrane. It localises to the cell junction. Its subcellular location is the paranodal septate junction. Functionally, required, with CNTNAP2, for radial and longitudinal organization of myelinated axons. Plays a role in the formation of functional distinct domains critical for saltatory conduction of nerve impulses in myelinated nerve fibers. Demarcates the paranodal region of the axo-glial junction. In association with contactin involved in the signaling between axons and myelinating glial cells. In Mus musculus (Mouse), this protein is Contactin-associated protein 1 (Cntnap1).